A 449-amino-acid chain; its full sequence is Protein cortex (449 aa).

WD repeat units lie at residues 108 to 148, 149 to 188, 198 to 237, 283 to 327, 345 to 382, and 386 to 425; these read TYSY…ISQG, YAEY…KIDS, NRNC…ISWR, DSDW…VRDT, TGEL…DQWG, and SGLD…KKMK. The short motif at 386–397 is the D-box element; it reads SGLDRVRTMVFS.

It belongs to the WD repeat CORT family.

Its subcellular location is the cytoplasm. In terms of biological role, controls wing pigmentation patterning by regulating scale cell development, thereby playing a key role in mimicry and crypsis. Probably acts as an activator of the anaphase promoting complex/cyclosome (APC/C) that promotes the ubiquitin ligase activity and substrate specificity of the APC/C. The chain is Protein cortex from Heliconius erato (Crimson patched longwing butterfly).